The chain runs to 193 residues: ATP synthase subunit b 2 (193 aa).

The helical transmembrane segment at Ile-44 to Pro-64 threads the bilayer.

This sequence belongs to the ATPase B chain family. F-type ATPases have 2 components, F(1) - the catalytic core - and F(0) - the membrane proton channel. F(1) has five subunits: alpha(3), beta(3), gamma(1), delta(1), epsilon(1). F(0) has three main subunits: a(1), b(2) and c(10-14). The alpha and beta chains form an alternating ring which encloses part of the gamma chain. F(1) is attached to F(0) by a central stalk formed by the gamma and epsilon chains, while a peripheral stalk is formed by the delta and b chains.

The protein resides in the cell inner membrane. In terms of biological role, f(1)F(0) ATP synthase produces ATP from ADP in the presence of a proton or sodium gradient. F-type ATPases consist of two structural domains, F(1) containing the extramembraneous catalytic core and F(0) containing the membrane proton channel, linked together by a central stalk and a peripheral stalk. During catalysis, ATP synthesis in the catalytic domain of F(1) is coupled via a rotary mechanism of the central stalk subunits to proton translocation. Functionally, component of the F(0) channel, it forms part of the peripheral stalk, linking F(1) to F(0). The b'-subunit is a diverged and duplicated form of b found in plants and photosynthetic bacteria. The sequence is that of ATP synthase subunit b 2 (atpF2) from Jannaschia sp. (strain CCS1).